We begin with the raw amino-acid sequence, 294 residues long: Proteasome subunit beta (294 aa).

The propeptide at 1–65 (MTADRPALRT…MESGDLAPHG (65 aa)) is removed in mature form; by autocatalysis. Threonine 66 functions as the Nucleophile in the catalytic mechanism.

Belongs to the peptidase T1B family. In terms of assembly, the 20S proteasome core is composed of 14 alpha and 14 beta subunits that assemble into four stacked heptameric rings, resulting in a barrel-shaped structure. The two inner rings, each composed of seven catalytic beta subunits, are sandwiched by two outer rings, each composed of seven alpha subunits. The catalytic chamber with the active sites is on the inside of the barrel. Has a gated structure, the ends of the cylinder being occluded by the N-termini of the alpha-subunits. Is capped by the proteasome-associated ATPase, ARC.

It is found in the cytoplasm. It catalyses the reaction Cleavage of peptide bonds with very broad specificity.. The protein operates within protein degradation; proteasomal Pup-dependent pathway. The formation of the proteasomal ATPase ARC-20S proteasome complex, likely via the docking of the C-termini of ARC into the intersubunit pockets in the alpha-rings, may trigger opening of the gate for substrate entry. Interconversion between the open-gate and close-gate conformations leads to a dynamic regulation of the 20S proteasome proteolysis activity. Its function is as follows. Component of the proteasome core, a large protease complex with broad specificity involved in protein degradation. This chain is Proteasome subunit beta, found in Rhodococcus jostii (strain RHA1).